The primary structure comprises 339 residues: 4-dimethylallyltryptophan N-methyltransferase easF (339 aa).

This sequence belongs to the methyltransferase superfamily. In terms of assembly, homodimer.

The enzyme catalyses 4-(3-methylbut-2-enyl)-L-tryptophan + S-adenosyl-L-methionine = 4-(3-methylbut-2-enyl)-L-abrine + S-adenosyl-L-homocysteine + H(+). It functions in the pathway alkaloid biosynthesis; ergot alkaloid biosynthesis. In terms of biological role, 4-dimethylallyltryptophan N-methyltransferase; part of the gene cluster that mediates the biosynthesis of fumiclavanine C, a fungal ergot alkaloid. DmaW catalyzes the first step of ergot alkaloid biosynthesis by condensing dimethylallyl diphosphate (DMAP) and tryptophan to form 4-dimethylallyl-L-tryptophan. The second step is catalyzed by the methyltransferase easF that methylates 4-dimethylallyl-L-tryptophan in the presence of S-adenosyl-L-methionine, resulting in the formation of 4-dimethylallyl-L-abrine. The catalase easC and the FAD-dependent oxidoreductase easE then transform 4-dimethylallyl-L-abrine to chanoclavine-I which is further oxidized by EasD in the presence of NAD(+), resulting in the formation of chanoclavine-I aldehyde. EasA reduces chanoclavine-I aldehyde to dihydrochanoclavine-I aldehyde that spontaneously dehydrates to form 6,8-dimethyl-6,7-didehydroergoline. EasG then catalyzes the reduction of 6,8-dimethyl-6,7-didehydroergoline to form festuclavine. Hydrolysis of festuclavine by easM then leads to the formation of fumigaclavine B which is in turn acetylated by easN to fumigaclavine A. Finally, easL catalyzes the conversion of fumigaclavine A into fumigaclavine C by attaching a dimethylallyl moiety to C-2 of the indole nucleus. This is 4-dimethylallyltryptophan N-methyltransferase easF from Aspergillus fumigatus (strain ATCC MYA-4609 / CBS 101355 / FGSC A1100 / Af293) (Neosartorya fumigata).